We begin with the raw amino-acid sequence, 142 residues long: Large ribosomal subunit protein uL11 (142 aa).

This sequence belongs to the universal ribosomal protein uL11 family. In terms of assembly, part of the ribosomal stalk of the 50S ribosomal subunit. Interacts with L10 and the large rRNA to form the base of the stalk. L10 forms an elongated spine to which L12 dimers bind in a sequential fashion forming a multimeric L10(L12)X complex. In terms of processing, one or more lysine residues are methylated.

Its function is as follows. Forms part of the ribosomal stalk which helps the ribosome interact with GTP-bound translation factors. The protein is Large ribosomal subunit protein uL11 of Magnetococcus marinus (strain ATCC BAA-1437 / JCM 17883 / MC-1).